A 439-amino-acid chain; its full sequence is General transcription factor IIE subunit 1 (439 aa).

N-acetylalanine is present on alanine 2. An HTH TFE/IIEalpha-type domain is found at 14–104 (LKRLAKYVIR…NYRTLVNVVK (91 aa)). Lysine 67 carries the post-translational modification N6-acetyllysine. Zn(2+)-binding residues include cysteine 129, cysteine 132, cysteine 154, and cysteine 157. Residues 129-157 (CPVCSSTFTDLEANQLFDPMTGTFRCTFC) form a C4-type zinc finger. Serine 268 bears the Phosphoserine mark. Residues 333–344 (SSAMAGSVGAAA) are compositionally biased toward low complexity. The tract at residues 333–392 (SSAMAGSVGAAAPVTTANGSDSESETSESDDDSPPRPAAVAVHKREEDEEEDDEFEEVAD) is disordered. Acidic residues-rich tracts occupy residues 354–364 (SESETSESDDD) and 379–392 (EDEEEDDEFEEVAD).

It belongs to the TFIIE alpha subunit family. Tetramer of two alpha and two beta chains. Interacts with TAF6/TAFII80. Interacts with ATF7IP. Interacts with SND1. Part of TBP-based Pol II pre-initiation complex (PIC), in which Pol II core assembles with general transcription factors and other specific initiation factors including GTF2E1, GTF2E2, GTF2F1, GTF2F2, TCEA1, ERCC2, ERCC3, GTF2H2, GTF2H3, GTF2H4, GTF2H5, GTF2A1, GTF2A2, GTF2B and TBP; this large multi-subunit PIC complex mediates DNA unwinding and targets Pol II core to the transcription start site where the first phosphodiester bond forms.

It localises to the nucleus. Functionally, recruits TFIIH to the initiation complex and stimulates the RNA polymerase II C-terminal domain kinase and DNA-dependent ATPase activities of TFIIH. Both TFIIH and TFIIE are required for promoter clearance by RNA polymerase. This is General transcription factor IIE subunit 1 (GTF2E1) from Pongo abelii (Sumatran orangutan).